The following is a 292-amino-acid chain: 11-beta-hydroxysteroid dehydrogenase 1 (292 aa).

Topologically, residues 2 to 7 (AFMKKY) are cytoplasmic. A helical; Signal-anchor for type II membrane protein transmembrane segment spans residues 8 to 24 (LLPLLGLFLAYYYYSAN). Topologically, residues 25 to 292 (EEFRPEMLQG…KFDISKLVNN (268 aa)) are lumenal. NADP(+)-binding positions include 41 to 67 (GASK…TARS), 92 to 93 (TM), and 119 to 121 (NHI). N123 and N162 each carry an N-linked (GlcNAc...) asparagine glycan. Substrate is bound at residue S170. The Proton acceptor role is filled by Y183. NADP(+) is bound at residue 183–187 (YSASK). Residue N207 is glycosylated (N-linked (GlcNAc...) asparagine). 218 to 222 (IDTDT) serves as a coordination point for NADP(+).

Belongs to the short-chain dehydrogenases/reductases (SDR) family. As to quaternary structure, homodimer. In terms of processing, glycosylated. In terms of tissue distribution, expressed in the eye.

It localises to the endoplasmic reticulum membrane. It is found in the microsome membrane. It carries out the reaction an 11beta-hydroxysteroid + NADP(+) = an 11-oxosteroid + NADPH + H(+). It catalyses the reaction corticosterone + NADP(+) = 11-dehydrocorticosterone + NADPH + H(+). The enzyme catalyses cortisone + NADPH + H(+) = cortisol + NADP(+). The catalysed reaction is a 7beta-hydroxysteroid + NADP(+) = a 7-oxosteroid + NADPH + H(+). It carries out the reaction 7-oxocholesterol + NADPH + H(+) = 7beta-hydroxycholesterol + NADP(+). It catalyses the reaction chenodeoxycholate + NADP(+) = 7-oxolithocholate + NADPH + H(+). The enzyme catalyses 7-oxolithocholate + NADPH + H(+) = ursodeoxycholate + NADP(+). The catalysed reaction is glycochenodeoxycholate + NADP(+) = 7-oxoglycolithocholate + NADPH + H(+). It carries out the reaction taurochenodeoxycholate + NADP(+) = 7-oxotaurolithocholate + NADPH + H(+). It catalyses the reaction tauroursodeoxycholate + NADP(+) = 7-oxotaurolithocholate + NADPH + H(+). The enzyme catalyses glycoursodeoxycholate + NADP(+) = 7-oxoglycolithocholate + NADPH + H(+). The catalysed reaction is 7-oxopregnenolone + NADPH + H(+) = 7beta-hydroxypregnenolone + NADP(+). It carries out the reaction 3beta,7alpha-dihydroxyandrost-5-en-17-one + NADP(+) = 3beta-hydroxy-5-androstene-7,17-dione + NADPH + H(+). It catalyses the reaction 3beta-hydroxy-5-androstene-7,17-dione + NADPH + H(+) = 3beta,7beta-dihydroxyandrost-5-en-17-one + NADP(+). The enzyme catalyses 3beta-hydroxy-5alpha-androstane-7,17-dione + NADPH + H(+) = 3beta,7beta-dihydroxy-5alpha-androstan-17-one + NADP(+). The protein operates within steroid metabolism. Functionally, controls the reversible conversion of biologically active glucocorticoids such as cortisone to cortisol, and 11-dehydrocorticosterone to corticosterone in the presence of NADP(H). Participates in the corticosteroid receptor-mediated anti-inflammatory response, as well as metabolic and homeostatic processes. Plays a role in the secretion of aqueous humor in the eye, maintaining a normotensive, intraocular environment. Bidirectional in vitro, predominantly functions as a reductase in vivo, thereby increasing the concentration of active glucocorticoids. It has broad substrate specificity, besides glucocorticoids, it accepts other steroid and sterol substrates. It has broad substrate specificity, besides glucocorticoids, it accepts other steroid and sterol substrates. Interconverts 7-oxo- and 7-hydroxy-neurosteroids such as 7-oxopregnenolone and 7beta-hydroxypregnenolone, 7-oxodehydroepiandrosterone (3beta-hydroxy-5-androstene-7,17-dione) and 7beta-hydroxydehydroepiandrosterone (3beta,7beta-dihydroxyandrost-5-en-17-one), among others. Catalyzes the stereo-specific conversion of the major dietary oxysterol, 7-ketocholesterol (7-oxocholesterol), into the more polar 7-beta-hydroxycholesterol metabolite. 7-oxocholesterol is one of the most important oxysterols, it participates in several events such as induction of apoptosis, accumulation in atherosclerotic lesions, lipid peroxidation, and induction of foam cell formation. Mediates the 7-oxo reduction of 7-oxolithocholate mainly to chenodeoxycholate, and to a lesser extent to ursodeoxycholate, both in its free form and when conjugated to glycine or taurine, providing a link between glucocorticoid activation and bile acid metabolism. Catalyzes the synthesis of 7-beta-25-dihydroxycholesterol from 7-oxo-25-hydroxycholesterol in vitro, which acts as a ligand for the G-protein-coupled receptor (GPCR) Epstein-Barr virus-induced gene 2 (EBI2) and may thereby regulate immune cell migration. The chain is 11-beta-hydroxysteroid dehydrogenase 1 from Oryctolagus cuniculus (Rabbit).